A 652-amino-acid chain; its full sequence is Threonine--tRNA ligase (652 aa).

One can recognise a TGS domain in the interval 1-61 (MIKLKLPDGS…DRDAEVEIVT (61 aa)). The tract at residues 243–548 (DHRKIGREMD…LIENYEGRFP (306 aa)) is catalytic. Zn(2+) contacts are provided by cysteine 348, histidine 399, and histidine 525.

Belongs to the class-II aminoacyl-tRNA synthetase family. As to quaternary structure, homodimer. Requires Zn(2+) as cofactor.

It localises to the cytoplasm. It carries out the reaction tRNA(Thr) + L-threonine + ATP = L-threonyl-tRNA(Thr) + AMP + diphosphate + H(+). Functionally, catalyzes the attachment of threonine to tRNA(Thr) in a two-step reaction: L-threonine is first activated by ATP to form Thr-AMP and then transferred to the acceptor end of tRNA(Thr). Also edits incorrectly charged L-seryl-tRNA(Thr). This is Threonine--tRNA ligase from Parvibaculum lavamentivorans (strain DS-1 / DSM 13023 / NCIMB 13966).